A 336-amino-acid chain; its full sequence is E3 ubiquitin-protein ligase RING2 (336 aa).

Residues 2–179 (TQTVQTNGVQ…AEDNGDSSHC (178 aa)) form an interaction with HIP2 region. An RING-type zinc finger spans residues 51-91 (CPICLDMLKNTMTTKECLHRFCADCIITALRSGNKECPTCR). The interaction with nucleosomes via an acidic patch on histone H2A and histone H2B stretch occupies residues 93–98 (KLVSKR). Positions 158–218 (RGKKHQIENG…NATENGGGDI (61 aa)) are disordered. Residues 176–190 (SSHCSNASVHSNQEA) are compositionally biased toward polar residues.

As to quaternary structure, component of chromatin-associated Polycomb (PcG) complexes. Component of a PRC1-like complex. Component of some MLL1/MLL complex.

The protein resides in the nucleus. The protein localises to the cytoplasm. It localises to the chromosome. The enzyme catalyses S-ubiquitinyl-[E2 ubiquitin-conjugating enzyme]-L-cysteine + [acceptor protein]-L-lysine = [E2 ubiquitin-conjugating enzyme]-L-cysteine + N(6)-ubiquitinyl-[acceptor protein]-L-lysine.. It participates in protein modification; protein ubiquitination. E3 ubiquitin-protein ligase that mediates monoubiquitination of 'Lys-119' of histone H2A (H2AK119Ub), thereby playing a central role in histone code and gene regulation. H2AK119Ub gives a specific tag for epigenetic transcriptional repression. Essential component of a Polycomb group (PcG) multiprotein PRC1-like complex, a complex class required to maintain the transcriptionally repressive state of many genes, including Hox genes, throughout development. PcG PRC1 complex acts via chromatin remodeling and modification of histones, rendering chromatin heritably changed in its expressibility. The chain is E3 ubiquitin-protein ligase RING2 (rnf2) from Danio rerio (Zebrafish).